A 121-amino-acid chain; its full sequence is MALSFVSSTRFSKMQYGIWHSGSFTQRVSVRCCEIANEAPRPKSKLQVGSPIIIVEAPKVIKTAASMPCLRANSGLVKPGDVGRIVSRKPKDLWAVRLSIGTYLLDGKYFKALELDEGDSD.

As to quaternary structure, biogenesis factor component of the plastidial NDH subcomplex A.

The protein localises to the plastid. It localises to the chloroplast. Its subcellular location is the chloroplast stroma. Functionally, required for both formation and activity of the chloroplast NAD(P)H dehydrogenase (NDH) complex of the photosynthetic electron transport chain. Functions in assembly or stabilization of the NDH complex; probably involved, together with CRR1 and CRR6, in the incorporation of NdhJ, NdhM, NdhK and NdhI into the NDH subcomplex A assembly intermediate (NAI500) to produce the complex NAI400. The chain is Protein CHLORORESPIRATORY REDUCTION 42, chloroplastic from Arabidopsis thaliana (Mouse-ear cress).